A 605-amino-acid polypeptide reads, in one-letter code: DNA mismatch repair protein MutL (605 aa).

Belongs to the DNA mismatch repair MutL/HexB family.

This protein is involved in the repair of mismatches in DNA. It is required for dam-dependent methyl-directed DNA mismatch repair. May act as a 'molecular matchmaker', a protein that promotes the formation of a stable complex between two or more DNA-binding proteins in an ATP-dependent manner without itself being part of a final effector complex. This chain is DNA mismatch repair protein MutL, found in Sinorhizobium medicae (strain WSM419) (Ensifer medicae).